The primary structure comprises 109 residues: Large ribosomal subunit protein uL22 (109 aa).

It belongs to the universal ribosomal protein uL22 family. In terms of assembly, part of the 50S ribosomal subunit.

This protein binds specifically to 23S rRNA; its binding is stimulated by other ribosomal proteins, e.g. L4, L17, and L20. It is important during the early stages of 50S assembly. It makes multiple contacts with different domains of the 23S rRNA in the assembled 50S subunit and ribosome. In terms of biological role, the globular domain of the protein is located near the polypeptide exit tunnel on the outside of the subunit, while an extended beta-hairpin is found that lines the wall of the exit tunnel in the center of the 70S ribosome. The polypeptide is Large ribosomal subunit protein uL22 (Bordetella avium (strain 197N)).